Consider the following 1147-residue polypeptide: Probable phospholipid-transporting ATPase IIB (1147 aa).

The Cytoplasmic portion of the chain corresponds to 1 to 146 (MADQIPLYPV…NQKYNVFTFI (146 aa)). The helical transmembrane segment at 147 to 168 (PGVLYEQFKFFLNLYFLVISCS) threads the bilayer. The Extracellular segment spans residues 169–173 (QFVPA). A helical membrane pass occupies residues 174-196 (LKIGYLYTYWAPLGFVLAVTMTR). Residues 197–380 (EAIDEFRRFQ…GLLDLELNRL (184 aa)) lie on the Cytoplasmic side of the membrane. The chain crosses the membrane as a helical span at residues 381 to 401 (TKALFLALVALSIVMVTLQGF). The Extracellular segment spans residues 402–409 (VGPWYRNL). A helical membrane pass occupies residues 410-431 (FRFLLLFSYIIPISLRVNLDMG). The Cytoplasmic portion of the chain corresponds to 432 to 930 (KAVYGWMMMK…GRNSYKRSAA (499 aa)). The 4-aspartylphosphate intermediate role is filled by Asp-468. The ATP site is built by Asp-468, Lys-469, and Thr-470. Asp-468 lines the Mg(2+) pocket. Mg(2+) is bound at residue Thr-470. Residues 503–535 (RDSYSQMQSQAGGNNTGSTPLRKAQSSAPKVRK) are disordered. Over residues 505–530 (SYSQMQSQAGGNNTGSTPLRKAQSSA) the composition is skewed to polar residues. ATP-binding residues include Glu-591, Phe-633, Lys-638, Lys-657, Arg-686, Thr-687, Thr-766, Gly-767, Asp-768, Arg-848, and Lys-854. Asp-874 lines the Mg(2+) pocket. ATP is bound by residues Asn-877 and Asp-878. Asp-878 is a Mg(2+) binding site. The chain crosses the membrane as a helical span at residues 931-951 (LGQFVMHRGLIISTMQAVFSS). Residues 952–963 (VFYFASVPLYQG) are Extracellular-facing. A helical membrane pass occupies residues 964–982 (FLMVGYATIYTMFPVFSLV). The Cytoplasmic segment spans residues 983–1012 (LDQDVKPEMAMLYPELYKDLTKGRSLSFKT). The helical transmembrane segment at 1013 to 1031 (FLIWVLISIYQGGILMYGA) threads the bilayer. Residues 1032-1038 (LVLFESE) lie on the Extracellular side of the membrane. A helical transmembrane segment spans residues 1039 to 1061 (FVHVVAISFTALILTELLMVALT). The Cytoplasmic portion of the chain corresponds to 1062–1067 (VRTWHW). Residues 1068–1088 (LMVVAEFLSLGCYVSSLAFLN) traverse the membrane as a helical segment. Topologically, residues 1089–1105 (EYFGIGRVSFGAFLDVA) are extracellular. The chain crosses the membrane as a helical span at residues 1106–1130 (FITTVTFLWKVSAITVVSCLPLYVL). Over 1131–1147 (KYLRRKLSPPSYCKLAS) the chain is Cytoplasmic.

Belongs to the cation transport ATPase (P-type) (TC 3.A.3) family. Type IV subfamily. Mg(2+) serves as cofactor.

It is found in the golgi apparatus. It localises to the trans-Golgi network membrane. The catalysed reaction is ATP + H2O + phospholipidSide 1 = ADP + phosphate + phospholipidSide 2.. The protein is Probable phospholipid-transporting ATPase IIB (ATP9B) of Homo sapiens (Human).